The following is a 726-amino-acid chain: Fatty acid oxidation complex subunit alpha (726 aa).

The tract at residues Met-1–Ser-189 is enoyl-CoA hydratase/isomerase. A substrate-binding site is contributed by Asp-296. The interval Glu-311 to Val-726 is 3-hydroxyacyl-CoA dehydrogenase. NAD(+) is bound by residues Met-324, Asp-343, Val-400–Glu-402, Lys-407, and Ser-429. Residue His-450 is the For 3-hydroxyacyl-CoA dehydrogenase activity of the active site. Asn-453 lines the NAD(+) pocket. Residues Asn-500 and Tyr-660 each contribute to the substrate site.

This sequence in the N-terminal section; belongs to the enoyl-CoA hydratase/isomerase family. In the C-terminal section; belongs to the 3-hydroxyacyl-CoA dehydrogenase family. In terms of assembly, heterotetramer of two alpha chains (FadB) and two beta chains (FadA).

The enzyme catalyses a (3S)-3-hydroxyacyl-CoA + NAD(+) = a 3-oxoacyl-CoA + NADH + H(+). It catalyses the reaction a (3S)-3-hydroxyacyl-CoA = a (2E)-enoyl-CoA + H2O. The catalysed reaction is a 4-saturated-(3S)-3-hydroxyacyl-CoA = a (3E)-enoyl-CoA + H2O. It carries out the reaction (3S)-3-hydroxybutanoyl-CoA = (3R)-3-hydroxybutanoyl-CoA. The enzyme catalyses a (3Z)-enoyl-CoA = a 4-saturated (2E)-enoyl-CoA. It catalyses the reaction a (3E)-enoyl-CoA = a 4-saturated (2E)-enoyl-CoA. It participates in lipid metabolism; fatty acid beta-oxidation. Its function is as follows. Involved in the aerobic and anaerobic degradation of long-chain fatty acids via beta-oxidation cycle. Catalyzes the formation of 3-oxoacyl-CoA from enoyl-CoA via L-3-hydroxyacyl-CoA. It can also use D-3-hydroxyacyl-CoA and cis-3-enoyl-CoA as substrate. The chain is Fatty acid oxidation complex subunit alpha from Aliivibrio salmonicida (strain LFI1238) (Vibrio salmonicida (strain LFI1238)).